We begin with the raw amino-acid sequence, 283 residues long: Orotidine 5'-phosphate decarboxylase (283 aa).

The active-site Proton donor is the Lys97.

Belongs to the OMP decarboxylase family. Type 2 subfamily.

It catalyses the reaction orotidine 5'-phosphate + H(+) = UMP + CO2. The protein operates within pyrimidine metabolism; UMP biosynthesis via de novo pathway; UMP from orotate: step 2/2. The sequence is that of Orotidine 5'-phosphate decarboxylase from Clostridium botulinum (strain Loch Maree / Type A3).